The following is a 119-amino-acid chain: Ribonuclease P protein component (119 aa).

This sequence belongs to the RnpA family. In terms of assembly, consists of a catalytic RNA component (M1 or rnpB) and a protein subunit.

The enzyme catalyses Endonucleolytic cleavage of RNA, removing 5'-extranucleotides from tRNA precursor.. Its function is as follows. RNaseP catalyzes the removal of the 5'-leader sequence from pre-tRNA to produce the mature 5'-terminus. It can also cleave other RNA substrates such as 4.5S RNA. The protein component plays an auxiliary but essential role in vivo by binding to the 5'-leader sequence and broadening the substrate specificity of the ribozyme. This chain is Ribonuclease P protein component, found in Streptococcus equi subsp. equi (strain 4047).